We begin with the raw amino-acid sequence, 177 residues long: Ureidoglycolate lyase (177 aa).

It belongs to the ureidoglycolate lyase family. Homodimer. Requires Ni(2+) as cofactor.

The catalysed reaction is (S)-ureidoglycolate = urea + glyoxylate. The protein operates within nitrogen metabolism; (S)-allantoin degradation. In terms of biological role, catalyzes the catabolism of the allantoin degradation intermediate (S)-ureidoglycolate, generating urea and glyoxylate. Involved in the utilization of allantoin as nitrogen source. The protein is Ureidoglycolate lyase of Burkholderia cepacia (Pseudomonas cepacia).